Here is a 516-residue protein sequence, read N- to C-terminus: Tyrosine decarboxylase 3 (516 aa).

N6-(pyridoxal phosphate)lysine is present on Lys-319.

The protein belongs to the group II decarboxylase family. In terms of assembly, homodimer. Pyridoxal 5'-phosphate serves as cofactor.

It carries out the reaction L-tyrosine + H(+) = tyramine + CO2. This chain is Tyrosine decarboxylase 3 (TYRDC-3), found in Petroselinum crispum (Parsley).